The chain runs to 89 residues: Small ribosomal subunit protein bS20 (89 aa).

Basic residues predominate over residues 1–12; it reads MANIKSAKKRAK. The interval 1–22 is disordered; that stretch reads MANIKSAKKRAKQTIVRNERNT.

It belongs to the bacterial ribosomal protein bS20 family.

Its function is as follows. Binds directly to 16S ribosomal RNA. This Xanthomonas oryzae pv. oryzae (strain KACC10331 / KXO85) protein is Small ribosomal subunit protein bS20.